The following is a 183-amino-acid chain: Ribulose bisphosphate carboxylase small subunit, chloroplastic 5 (183 aa).

The N-terminal 42 residues, 1–42 (MAAAMMNKSVLLNKQCGKPAAVPKVVMSKGGFARTSAVNKNR), are a transit peptide targeting the chloroplast.

Belongs to the RuBisCO small chain family. Heterohexadecamer of 8 large and 8 small subunits.

Its subcellular location is the plastid. The protein resides in the chloroplast. Its function is as follows. RuBisCO catalyzes two reactions: the carboxylation of D-ribulose 1,5-bisphosphate, the primary event in carbon dioxide fixation, as well as the oxidative fragmentation of the pentose substrate. Both reactions occur simultaneously and in competition at the same active site. Although the small subunit is not catalytic it is essential for maximal activity. In Acetabularia acetabulum (Mermaid's wine glass), this protein is Ribulose bisphosphate carboxylase small subunit, chloroplastic 5.